The primary structure comprises 432 residues: Adenylosuccinate synthetase (432 aa).

GTP-binding positions include 12–18 (GDEGKGK) and 40–42 (GHT). The active-site Proton acceptor is D13. Residues D13 and G40 each contribute to the Mg(2+) site. IMP is bound by residues 13 to 16 (DEGK), 38 to 41 (NAGH), T131, R145, Q226, T241, and R305. H41 (proton donor) is an active-site residue. Residue 301–307 (ATTGRPR) coordinates substrate. GTP is bound by residues R307, 333–335 (KLD), and 415–417 (STG).

The protein belongs to the adenylosuccinate synthetase family. Homodimer. Mg(2+) is required as a cofactor.

The protein resides in the cytoplasm. The catalysed reaction is IMP + L-aspartate + GTP = N(6)-(1,2-dicarboxyethyl)-AMP + GDP + phosphate + 2 H(+). Its pathway is purine metabolism; AMP biosynthesis via de novo pathway; AMP from IMP: step 1/2. In terms of biological role, plays an important role in the de novo pathway of purine nucleotide biosynthesis. Catalyzes the first committed step in the biosynthesis of AMP from IMP. The sequence is that of Adenylosuccinate synthetase from Magnetococcus marinus (strain ATCC BAA-1437 / JCM 17883 / MC-1).